Consider the following 2389-residue polypeptide: Highly reducing polyketide synthase Dhc3 (2389 aa).

A Ketosynthase family 3 (KS3) domain is found at D9–S433. Residues C181, H316, and H356 each act as for beta-ketoacyl synthase activity in the active site. The tract at residues F551 to N861 is malonyl-CoA:ACP transacylase (MAT) domain. S641 serves as the catalytic For malonyltransferase activity. The segment at R944–T1079 is N-terminal hotdog fold. The PKS/mFAS DH domain occupies R944–A1263. A dehydratase (DH) domain region spans residues L946–E1262. Residue H976 is the Proton acceptor; for dehydratase activity of the active site. The tract at residues P1107–A1263 is C-terminal hotdog fold. D1173 acts as the Proton donor; for dehydratase activity in catalysis. The segment at G1673 to L1987 is enoylreductase (ER) domain. The catalytic ketoreductase (KRc) domain stretch occupies residues A2011–D2191. In terms of domain architecture, Carrier spans E2302 to S2379. The residue at position 2339 (S2339) is an O-(pantetheine 4'-phosphoryl)serine.

It functions in the pathway mycotoxin biosynthesis. Highly reducing polyketide synthase; part of the gene cluster that mediates the biosynthesis of 10,11-dehydrocurvularin, a prevalent fungal phytotoxin with heat shock response and immune-modulatory activities. The highly reducing polyketide synthase Dhc3 is responsible for biosynthesis up to the tetraketide stage. The non-reducing polyketide synthase Dhc5 then conducts four additional chain extension cycles, producing the unreduced part of the nascent octaketide from C-1 to C-8 in 10,11-dehydrocurvularin. The sequence is that of Highly reducing polyketide synthase Dhc3 (Dhc3) from Alternaria cinerariae.